The chain runs to 110 residues: Nucleoid-associated protein PERMA_0533 (110 aa).

This sequence belongs to the YbaB/EbfC family. As to quaternary structure, homodimer.

It localises to the cytoplasm. The protein resides in the nucleoid. Binds to DNA and alters its conformation. May be involved in regulation of gene expression, nucleoid organization and DNA protection. In Persephonella marina (strain DSM 14350 / EX-H1), this protein is Nucleoid-associated protein PERMA_0533.